Reading from the N-terminus, the 1013-residue chain is Tolloid-like protein 1 (1013 aa).

Residues 1–30 form the signal peptide; sequence MGLGTLSPRMLVWLVASGIVFYGELWVCAG. The propeptide occupies 31–147; that stretch reads LDYDYTFDGN…GQNEKNRVPR (117 aa). Residues 148–347 form the Peptidase M12A domain; it reads AATSRTERIW…AQARKLYRCP (200 aa). N-linked (GlcNAc...) asparagine glycosylation occurs at Asn169. Intrachain disulfides connect Cys190-Cys346, Cys210-Cys232, Cys212-Cys213, and Cys349-Cys375. Zn(2+) is bound at residue His240. The active site involves Glu241. Zn(2+) contacts are provided by His244 and His250. CUB domains lie at 349-461 and 462-574; these read CGET…YEAI and CGGE…FFKE. Residues Asn359 and Asn390 are each glycosylated (N-linked (GlcNAc...) asparagine). Cystine bridges form between Cys402–Cys424, Cys462–Cys488, Cys515–Cys537, Cys578–Cys590, Cys586–Cys599, Cys601–Cys614, Cys618–Cys644, Cys671–Cys693, Cys734–Cys745, Cys741–Cys754, Cys756–Cys769, Cys774–Cys800, Cys827–Cys849, Cys887–Cys917, and Cys944–Cys966. An EGF-like 1; calcium-binding domain is found at 574–615; sequence EEDECAKPDRGGCEQRCLNTLGSYQCACEPGYELGPDRRSCE. The 113-residue stretch at 618–730 folds into the CUB 3 domain; sequence CGGLLTKLNG…KGFKAHFFSD (113 aa). Asn626 carries an N-linked (GlcNAc...) asparagine glycan. The EGF-like 2; calcium-binding domain maps to 730 to 770; the sequence is DKDECSKDNGGCQHECVNTMGSYMCQCRNGFVLHDNKHDCK. CUB domains lie at 774 to 886 and 887 to 1003; these read CEQK…HSTE and CGGR…YKSI.

Zn(2+) is required as a cofactor.

The protein resides in the secreted. In terms of biological role, protease which processes procollagen C-propeptides, such as chordin, pro-biglycan and pro-lysyl oxidase. Required for the embryonic development. Predominant protease, which in the development, influences dorsal-ventral patterning and skeletogenesis. This chain is Tolloid-like protein 1 (TLL1), found in Homo sapiens (Human).